Reading from the N-terminus, the 308-residue chain is UPF0026 protein jhp_0109 (308 aa).

The region spanning 18–247 is the Radical SAM core domain; the sequence is FGKSLGVDLS…VSLPKRSTAQ (230 aa). The [4Fe-4S] cluster site is built by cysteine 33, cysteine 37, and cysteine 40.

Belongs to the UPF0026 family. It depends on [4Fe-4S] cluster as a cofactor.

The polypeptide is UPF0026 protein jhp_0109 (Helicobacter pylori (strain J99 / ATCC 700824) (Campylobacter pylori J99)).